A 431-amino-acid polypeptide reads, in one-letter code: Adenylosuccinate synthetase (431 aa).

Residues 12–18 and 40–42 each bind GTP; these read GDEGKGK and GHT. Asp13 acts as the Proton acceptor in catalysis. Residues Asp13 and Gly40 each coordinate Mg(2+). IMP is bound by residues 13–16, 38–41, Thr130, Arg144, Gln225, Thr240, and Arg304; these read DEGK and NAGH. His41 acts as the Proton donor in catalysis. 300–306 provides a ligand contact to substrate; the sequence is ATTGRPR. Residues Arg306, 332 to 334, and 414 to 416 each bind GTP; these read KLD and SVG.

Belongs to the adenylosuccinate synthetase family. In terms of assembly, homodimer. It depends on Mg(2+) as a cofactor.

It is found in the cytoplasm. It catalyses the reaction IMP + L-aspartate + GTP = N(6)-(1,2-dicarboxyethyl)-AMP + GDP + phosphate + 2 H(+). Its pathway is purine metabolism; AMP biosynthesis via de novo pathway; AMP from IMP: step 1/2. Functionally, plays an important role in the de novo pathway of purine nucleotide biosynthesis. Catalyzes the first committed step in the biosynthesis of AMP from IMP. This is Adenylosuccinate synthetase from Geotalea uraniireducens (strain Rf4) (Geobacter uraniireducens).